Consider the following 1176-residue polypeptide: Carbamoyl phosphate synthase arginine-specific large chain (1176 aa).

A mitochondrion-targeting transit peptide spans 1–11 (MLRSISIASRA). Positions 70–465 (SRSPDVKKVL…SLQKAIRQVD (396 aa)) are carboxyphosphate synthetic domain. Residues arginine 197, arginine 237, glycine 243, glycine 244, lysine 273, leucine 275, glutamate 280, glycine 306, threonine 307, histidine 308, glutamine 348, and glutamate 362 each contribute to the ATP site. The 191-residue stretch at 201–391 (VQALNEIDIP…LAYTAAKIAL (191 aa)) folds into the ATP-grasp 1 domain. Positions 348, 362, and 364 each coordinate Mg(2+). Mn(2+) is bound by residues glutamine 348, glutamate 362, and asparagine 364. An oligomerization domain region spans residues 466–610 (PNFAGFEAYW…YTSYNATTHD (145 aa)). The interval 611-997 (VKFDNGTMVL…AYWAALLSVN (387 aa)) is carbamoyl phosphate synthetic domain. Positions 734–931 (SSILDSIGVD…FIDTASAAIM (198 aa)) constitute an ATP-grasp 2 domain. ATP-binding residues include arginine 770, glutamine 809, isoleucine 811, glutamate 816, glycine 841, valine 842, histidine 843, serine 844, glutamine 884, and glutamate 902. Positions 884, 902, and 904 each coordinate Mg(2+). Residues glutamine 884, glutamate 902, and asparagine 904 each contribute to the Mn(2+) site. Positions 998–1137 (GMKLPKANSG…NPIPYSEGFK (140 aa)) are allosteric domain. Residues 999–1154 (MKLPKANSGI…RDFVGEAATT (156 aa)) form the MGS-like domain.

Belongs to the CarB family. Heterodimer composed of 2 chains; the small (or glutamine) chain promotes the hydrolysis of glutamine to ammonia, which is used by the large (or ammonia) chain to synthesize carbamoyl phosphate. The cofactor is Mg(2+). Requires Mn(2+) as cofactor.

The protein resides in the mitochondrion. It carries out the reaction hydrogencarbonate + L-glutamine + 2 ATP + H2O = carbamoyl phosphate + L-glutamate + 2 ADP + phosphate + 2 H(+). It catalyses the reaction hydrogencarbonate + NH4(+) + 2 ATP = carbamoyl phosphate + 2 ADP + phosphate + 2 H(+). The protein operates within amino-acid biosynthesis; L-arginine biosynthesis; carbamoyl phosphate from bicarbonate: step 1/1. Functionally, large subunit of the arginine-specific carbamoyl phosphate synthase (CPSase). CPSase catalyzes the formation of carbamoyl phosphate from the ammonia moiety of glutamine, hydrogencarbonate, and phosphate donated by ATP, constituting the first step of 2 biosynthetic pathways, one leading to arginine and/or urea and the other to pyrimidine nucleotides. The large subunit (synthetase) binds the substrates ammonia (free or transferred from glutamine from the small subunit), hydrogencarbonate and ATP and carries out an ATP-coupled ligase reaction, activating hydrogencarbonate by forming carboxy phosphate which reacts with ammonia to form carbamoyl phosphate. This chain is Carbamoyl phosphate synthase arginine-specific large chain (argA), found in Cutaneotrichosporon cutaneum (Yeast).